The sequence spans 230 residues: uncharacterized protein (230 aa).

Residues 93 to 115 (VFLYYFLIVYTSGNVDLISRFLF) form a helical membrane-spanning segment.

Belongs to the DUP/COS family.

The protein resides in the membrane. This is an uncharacterized protein from Saccharomyces cerevisiae (strain ATCC 204508 / S288c) (Baker's yeast).